The following is a 177-amino-acid chain: MSRVAKAPVTVPNGVTVTQNGRQVEVKGSKGTLSFNLHALVELKQEEGKLQLAPAKESKDAWMQAGTARAVLNNLVKGVSEGFERKLQLVGVGYKAAVKGTVVNLNLGYSHPIDYALPEGVTAETPTATEIILKSANKQLLGQVAAEIRAYRSPEPYKGKGVRYSDEVILRKEAKKK.

It belongs to the universal ribosomal protein uL6 family. Part of the 50S ribosomal subunit.

This protein binds to the 23S rRNA, and is important in its secondary structure. It is located near the subunit interface in the base of the L7/L12 stalk, and near the tRNA binding site of the peptidyltransferase center. In Acinetobacter baumannii (strain AB307-0294), this protein is Large ribosomal subunit protein uL6.